Here is a 1171-residue protein sequence, read N- to C-terminus: Putative tricorn protease homolog 2 (1171 aa).

The segment at 432–498 (AGYPPDAGDE…GSPGTPATAG (67 aa)) is disordered. 2 stretches are compositionally biased toward low complexity: residues 444-456 (AGTA…APDA) and 466-498 (IAAG…ATAG). Histidine 827 acts as the Charge relay system in catalysis. Residues 842-941 (YQRWQGLLGA…RVAVVPLVDE (100 aa)) form a PDZ-like region. Residue 1002 to 1004 (AGG) participates in substrate binding. The active-site Nucleophile is serine 1051. 1079 to 1081 (GMT) serves as a coordination point for substrate. Glutamate 1109 functions as the Charge relay system in the catalytic mechanism. Residues 1149 to 1171 (PPATPPGYEAVPDRSRPPLPPRE) are disordered. The segment covering 1159-1171 (VPDRSRPPLPPRE) has biased composition (basic and acidic residues).

The protein belongs to the peptidase S41B family.

Its subcellular location is the cytoplasm. Its function is as follows. Degrades oligopeptides in a sequential manner. The protein is Putative tricorn protease homolog 2 (tri2) of Streptomyces coelicolor (strain ATCC BAA-471 / A3(2) / M145).